The chain runs to 497 residues: MAMEQRPKTKIVCTLGPASRSVPMVEKLLMAGMSVARFNFSHGSYEYHQETLDNLRQAMLNTGMLCAVMLDTKGPEIRTGFLKDGKPIQLKQGQEITISTDYDLKGDEKTICMSYKKLAQDVNPGMVILCADGTISLKVLSCDKEKGTVRCRCENTSMLGERKNVNLPGVVVDLPTLTEKDKQDILEWGVPNQIDMIALSFVRKGSDLVQVRKLLGKHAKTILLMSKVENQEGVANFDDILINSDAFMIARGDLGMEIPIEKIFLAQKVMIYKCNFMGKPVVTATQMLESMIKSPRPTRAEATDVANAVLDGTDCVMLSGETAAGAYPELAVRTMAKICVEAESTLDYGDIFKRIMLHAAVPMSPMESLASSAVRTATSSRATLMMVLTRGGSTARLVAKYRPGIPILSVVVPEITSDSFDWACSNEAPARHSLIYRGLVPVLYAGSARASIDESTEETLEFASEYGKKKQLCKTGDSVVALFRTGNAIVIKILTVK.

Substrate is bound at residue arginine 37. Asparagine 39, serine 41, aspartate 71, and threonine 72 together coordinate K(+). 39-42 (NFSH) provides a ligand contact to ATP. ATP is bound by residues arginine 78 and lysine 163. Lysine 227 is a binding site for substrate. Position 229 (glutamate 229) interacts with Mg(2+). Substrate is bound by residues glycine 252, aspartate 253, and threonine 285. Mg(2+) is bound at residue aspartate 253.

This sequence belongs to the pyruvate kinase family. As to quaternary structure, homotetramer. The cofactor is Mg(2+). K(+) is required as a cofactor.

The protein resides in the cytoplasm. Its subcellular location is the cytosol. The enzyme catalyses pyruvate + ATP = phosphoenolpyruvate + ADP + H(+). Its pathway is carbohydrate degradation; glycolysis; pyruvate from D-glyceraldehyde 3-phosphate: step 5/5. Its function is as follows. Key regulatory enzyme of the glycolytic pathway that catalyzes the final step of glycolysis, converting ADP and phosphoenolpyruvate (PEP) to ATP and pyruvate by essentially irreversible transphosphorylation. The chain is Probable pyruvate kinase, cytosolic isozyme from Arabidopsis thaliana (Mouse-ear cress).